A 259-amino-acid chain; its full sequence is ATP synthase subunit b 3 (259 aa).

The helical transmembrane segment at 5–27 threads the bilayer; it reads WWTLGLQAINVLILIWILSRFLF.

Belongs to the ATPase B chain family. As to quaternary structure, F-type ATPases have 2 components, F(1) - the catalytic core - and F(0) - the membrane proton channel. F(1) has five subunits: alpha(3), beta(3), gamma(1), delta(1), epsilon(1). F(0) has three main subunits: a(1), b(2) and c(10-14). The alpha and beta chains form an alternating ring which encloses part of the gamma chain. F(1) is attached to F(0) by a central stalk formed by the gamma and epsilon chains, while a peripheral stalk is formed by the delta and b chains.

The protein resides in the cell inner membrane. Its function is as follows. F(1)F(0) ATP synthase produces ATP from ADP in the presence of a proton or sodium gradient. F-type ATPases consist of two structural domains, F(1) containing the extramembraneous catalytic core and F(0) containing the membrane proton channel, linked together by a central stalk and a peripheral stalk. During catalysis, ATP synthesis in the catalytic domain of F(1) is coupled via a rotary mechanism of the central stalk subunits to proton translocation. Component of the F(0) channel, it forms part of the peripheral stalk, linking F(1) to F(0). The chain is ATP synthase subunit b 3 from Beijerinckia indica subsp. indica (strain ATCC 9039 / DSM 1715 / NCIMB 8712).